We begin with the raw amino-acid sequence, 657 residues long: Probable cobalt/nickel-exporting P-type ATPase (657 aa).

The next 5 membrane-spanning stretches (helical) occupy residues 40 to 60 (WATV…NGAP), 62 to 82 (AMWW…SAWA), 101 to 121 (AAVG…IVIF), 268 to 288 (LGMV…GADL), and 299 to 319 (MIVA…LSAI). Residue aspartate 347 is the 4-aspartylphosphate intermediate of the active site. 2 residues coordinate Mg(2+): aspartate 543 and aspartate 547. A helical membrane pass occupies residues 596-618 (VVTVNLAIAATFIAVLVLWDLFG).

It belongs to the cation transport ATPase (P-type) (TC 3.A.3) family. Type IB subfamily.

It localises to the cell membrane. Functionally, involved in heavy metal homeostasis. Probably exports nickel and cobalt ions out of the cell. In Mycobacterium bovis (strain ATCC BAA-935 / AF2122/97), this protein is Probable cobalt/nickel-exporting P-type ATPase (ctpD).